Reading from the N-terminus, the 363-residue chain is Ribosomal RNA large subunit methyltransferase M (363 aa).

S-adenosyl-L-methionine contacts are provided by residues Ser-190, 223–226 (CPGG), Asp-242, Asp-262, and Asp-279. Lys-308 acts as the Proton acceptor in catalysis.

It belongs to the class I-like SAM-binding methyltransferase superfamily. RNA methyltransferase RlmE family. RlmM subfamily. Monomer.

It is found in the cytoplasm. It catalyses the reaction cytidine(2498) in 23S rRNA + S-adenosyl-L-methionine = 2'-O-methylcytidine(2498) in 23S rRNA + S-adenosyl-L-homocysteine + H(+). Catalyzes the 2'-O-methylation at nucleotide C2498 in 23S rRNA. The sequence is that of Ribosomal RNA large subunit methyltransferase M from Vibrio vulnificus (strain CMCP6).